The following is a 307-amino-acid chain: Ribosomal RNA small subunit methyltransferase A (307 aa).

Residues N35, V37, G62, E83, D113, and N136 each contribute to the S-adenosyl-L-methionine site.

It belongs to the class I-like SAM-binding methyltransferase superfamily. rRNA adenine N(6)-methyltransferase family. RsmA subfamily.

It is found in the cytoplasm. It catalyses the reaction adenosine(1518)/adenosine(1519) in 16S rRNA + 4 S-adenosyl-L-methionine = N(6)-dimethyladenosine(1518)/N(6)-dimethyladenosine(1519) in 16S rRNA + 4 S-adenosyl-L-homocysteine + 4 H(+). Specifically dimethylates two adjacent adenosines (A1518 and A1519) in the loop of a conserved hairpin near the 3'-end of 16S rRNA in the 30S particle. May play a critical role in biogenesis of 30S subunits. In Bifidobacterium longum (strain DJO10A), this protein is Ribosomal RNA small subunit methyltransferase A.